The following is a 216-amino-acid chain: ATP phosphoribosyltransferase (216 aa).

Belongs to the ATP phosphoribosyltransferase family. Short subfamily. Heteromultimer composed of HisG and HisZ subunits.

It localises to the cytoplasm. It catalyses the reaction 1-(5-phospho-beta-D-ribosyl)-ATP + diphosphate = 5-phospho-alpha-D-ribose 1-diphosphate + ATP. It functions in the pathway amino-acid biosynthesis; L-histidine biosynthesis; L-histidine from 5-phospho-alpha-D-ribose 1-diphosphate: step 1/9. Catalyzes the condensation of ATP and 5-phosphoribose 1-diphosphate to form N'-(5'-phosphoribosyl)-ATP (PR-ATP). Has a crucial role in the pathway because the rate of histidine biosynthesis seems to be controlled primarily by regulation of HisG enzymatic activity. The chain is ATP phosphoribosyltransferase from Microcystis aeruginosa (strain NIES-843 / IAM M-2473).